Consider the following 483-residue polypeptide: Glutamyl-tRNA(Gln) amidotransferase subunit A (483 aa).

Catalysis depends on charge relay system residues Lys-75 and Ser-150. Ser-174 functions as the Acyl-ester intermediate in the catalytic mechanism.

This sequence belongs to the amidase family. GatA subfamily. Heterotrimer of A, B and C subunits.

It carries out the reaction L-glutamyl-tRNA(Gln) + L-glutamine + ATP + H2O = L-glutaminyl-tRNA(Gln) + L-glutamate + ADP + phosphate + H(+). Its function is as follows. Allows the formation of correctly charged Gln-tRNA(Gln) through the transamidation of misacylated Glu-tRNA(Gln) in organisms which lack glutaminyl-tRNA synthetase. The reaction takes place in the presence of glutamine and ATP through an activated gamma-phospho-Glu-tRNA(Gln). The sequence is that of Glutamyl-tRNA(Gln) amidotransferase subunit A from Legionella pneumophila (strain Paris).